Here is a 468-residue protein sequence, read N- to C-terminus: Glutamate--tRNA ligase (468 aa).

A 'HIGH' region motif is present at residues 10-20; sequence PSPTGDLHIGG. Zn(2+) is bound by residues cysteine 99, cysteine 101, cysteine 126, and aspartate 128. The 'KMSKS' region signature appears at 236–240; that stretch reads RLSKR. Residue lysine 239 coordinates ATP.

It belongs to the class-I aminoacyl-tRNA synthetase family. Glutamate--tRNA ligase type 1 subfamily. Monomer. Zn(2+) is required as a cofactor.

The protein localises to the cytoplasm. It carries out the reaction tRNA(Glu) + L-glutamate + ATP = L-glutamyl-tRNA(Glu) + AMP + diphosphate. Its function is as follows. Catalyzes the attachment of glutamate to tRNA(Glu) in a two-step reaction: glutamate is first activated by ATP to form Glu-AMP and then transferred to the acceptor end of tRNA(Glu). This Syntrophobacter fumaroxidans (strain DSM 10017 / MPOB) protein is Glutamate--tRNA ligase.